The following is a 95-amino-acid chain: Aspartyl/glutamyl-tRNA(Asn/Gln) amidotransferase subunit C (95 aa).

Belongs to the GatC family. Heterotrimer of A, B and C subunits.

It catalyses the reaction L-glutamyl-tRNA(Gln) + L-glutamine + ATP + H2O = L-glutaminyl-tRNA(Gln) + L-glutamate + ADP + phosphate + H(+). The catalysed reaction is L-aspartyl-tRNA(Asn) + L-glutamine + ATP + H2O = L-asparaginyl-tRNA(Asn) + L-glutamate + ADP + phosphate + 2 H(+). Allows the formation of correctly charged Asn-tRNA(Asn) or Gln-tRNA(Gln) through the transamidation of misacylated Asp-tRNA(Asn) or Glu-tRNA(Gln) in organisms which lack either or both of asparaginyl-tRNA or glutaminyl-tRNA synthetases. The reaction takes place in the presence of glutamine and ATP through an activated phospho-Asp-tRNA(Asn) or phospho-Glu-tRNA(Gln). This is Aspartyl/glutamyl-tRNA(Asn/Gln) amidotransferase subunit C from Campylobacter fetus subsp. fetus (strain 82-40).